A 275-amino-acid chain; its full sequence is Protein rolling stone (275 aa).

A run of 6 helical transmembrane segments spans residues 45-65 (LLYR…CVIV), 72-92 (FFIY…LISA), 127-147 (WLYN…WVFL), 162-182 (IITH…IAFP), 185-205 (ILHM…TLIY), and 232-252 (MVTF…LFGL).

As to expression, expressed in cells of the somatic mesoderm, most notably the muscle founder cells, between embryonic stages 12 and 14, in growing muscle fibers in dorsal, lateral and ventral positions. At stage 16 strongest expression is in some ventral muscles and muscle 8. At stages 16/17 expression is restricted to some cells of the CNS, the brain and the gonads.

It is found in the membrane. Functionally, may have a central role in the fusion process during myogenesis, within the somatic mesoderm. The chain is Protein rolling stone (rost) from Drosophila melanogaster (Fruit fly).